We begin with the raw amino-acid sequence, 381 residues long: Cytochrome b (381 aa).

Helical transmembrane passes span 34 to 54 (FGSLLATCLALQIITGIFLAM), 78 to 99 (WLIRNMHANGASLFFMCIYLHI), 114 to 134 (WNTGIILLLLVMATAFVGYVL), and 179 to 199 (FFTFHFLLPFAITGLTAVHLL). 2 residues coordinate heme b: histidine 84 and histidine 98. 2 residues coordinate heme b: histidine 183 and histidine 197. Histidine 202 is a binding site for a ubiquinone. A run of 4 helical transmembrane segments spans residues 227 to 247 (YKDLLGLILMLTFLLTLTLFS), 289 to 309 (LGGVLALLFSILILFLMPTLH), 321 to 341 (LTQILFWSLVADLLVLTWIGG), and 348 to 368 (FIIIGQVASTFYFLILLLLMP).

The protein belongs to the cytochrome b family. In terms of assembly, the cytochrome bc1 complex contains 3 respiratory subunits (MT-CYB, CYC1 and UQCRFS1), 2 core proteins (UQCRC1 and UQCRC2) and probably 6 low-molecular weight proteins. Requires heme b as cofactor.

Its subcellular location is the mitochondrion inner membrane. In terms of biological role, component of the ubiquinol-cytochrome c reductase complex (complex III or cytochrome b-c1 complex) that is part of the mitochondrial respiratory chain. The b-c1 complex mediates electron transfer from ubiquinol to cytochrome c. Contributes to the generation of a proton gradient across the mitochondrial membrane that is then used for ATP synthesis. In Chelonia mydas (Green sea-turtle), this protein is Cytochrome b (MT-CYB).